Consider the following 282-residue polypeptide: Sulfur carrier protein FdhD (282 aa).

C115 serves as the catalytic Cysteine persulfide intermediate.

The protein belongs to the FdhD family.

It is found in the cytoplasm. Its function is as follows. Required for formate dehydrogenase (FDH) activity. Acts as a sulfur carrier protein that transfers sulfur from IscS to the molybdenum cofactor prior to its insertion into FDH. This Streptomyces avermitilis (strain ATCC 31267 / DSM 46492 / JCM 5070 / NBRC 14893 / NCIMB 12804 / NRRL 8165 / MA-4680) protein is Sulfur carrier protein FdhD.